We begin with the raw amino-acid sequence, 268 residues long: tRNA pseudouridine synthase A (268 aa).

Asp52 acts as the Nucleophile in catalysis. Residue Tyr110 participates in substrate binding.

The protein belongs to the tRNA pseudouridine synthase TruA family. In terms of assembly, homodimer.

The enzyme catalyses uridine(38/39/40) in tRNA = pseudouridine(38/39/40) in tRNA. Formation of pseudouridine at positions 38, 39 and 40 in the anticodon stem and loop of transfer RNAs. This chain is tRNA pseudouridine synthase A, found in Prochlorococcus marinus subsp. pastoris (strain CCMP1986 / NIES-2087 / MED4).